A 273-amino-acid polypeptide reads, in one-letter code: Large ribosomal subunit protein uL2 (273 aa).

The interval 223–273 (VVMNPVDHPMGGGEGRSSGGRHPCTPWGVPTKGHKTRSNKSTDKYIVKRRG) is disordered. The segment covering 262–273 (KSTDKYIVKRRG) has biased composition (basic and acidic residues).

This sequence belongs to the universal ribosomal protein uL2 family. Part of the 50S ribosomal subunit. Forms a bridge to the 30S subunit in the 70S ribosome.

In terms of biological role, one of the primary rRNA binding proteins. Required for association of the 30S and 50S subunits to form the 70S ribosome, for tRNA binding and peptide bond formation. It has been suggested to have peptidyltransferase activity; this is somewhat controversial. Makes several contacts with the 16S rRNA in the 70S ribosome. This Syntrophus aciditrophicus (strain SB) protein is Large ribosomal subunit protein uL2.